The following is a 479-amino-acid chain: MAQHTVYFPDAFLTQMREAMPSTLSFDDFLAACQRPLRRSIRVNTLKISVADFLQLTAPYGWTLTPIPWCEEGFWIERDNEDALPLGSTAEHLSGLFYIQEASSMLPVAALFADGNAPQRVMDVAAAPGSKTTQIAARMNNEGAILANEFSASRVKVLHANISRCGISNVALTHFDGRVFGVAVPEMFDAILLDAPCSGEGVVRKDPDALKNWSPESNQEIAATQRELIDSAFHALRPGGTLVYSTCTLNREENEAVCMWLKETYPDAVEFLPLGELFPAANKALTEEGFLHVFPQIYDCEGFFVARLRKTQAIPALPAPKYKVGNFPFSPVKDREAGQIRQAAAGVGLNWDENLRLWQRDKELWLFPVGIEALIGKVRFSRLGIKLAETHNKGYRWQHEAVIALATPDNVNAFELTPQEAEEWYRGRDVYPQAAPVADDVLVTFQHQPIGLAKRIGSRLKNSYPRELVRDGKLFTSNA.

S-adenosyl-L-methionine-binding positions include 125–131 (AAAPGSK), Glu149, Asp176, and Asp194. Cys247 serves as the catalytic Nucleophile.

The protein belongs to the class I-like SAM-binding methyltransferase superfamily. RsmB/NOP family.

The protein localises to the cytoplasm. It catalyses the reaction cytidine(1407) in 16S rRNA + S-adenosyl-L-methionine = 5-methylcytidine(1407) in 16S rRNA + S-adenosyl-L-homocysteine + H(+). In terms of biological role, specifically methylates the cytosine at position 1407 (m5C1407) of 16S rRNA. This is Ribosomal RNA small subunit methyltransferase F from Escherichia coli (strain ATCC 8739 / DSM 1576 / NBRC 3972 / NCIMB 8545 / WDCM 00012 / Crooks).